Here is a 124-residue protein sequence, read N- to C-terminus: Ribonuclease pancreatic (124 aa).

Residues 1-13 show a composition bias toward basic and acidic residues; the sequence is KESAAAKFERQHM. Residues 1–23 are disordered; that stretch reads KESAAAKFERQHMDPSASSISSS. Residues lysine 7 and arginine 10 each contribute to the substrate site. Histidine 12 acts as the Proton acceptor in catalysis. Intrachain disulfides connect cysteine 26/cysteine 84, cysteine 40/cysteine 95, cysteine 58/cysteine 110, and cysteine 65/cysteine 72. The N-linked (GlcNAc...) asparagine glycan is linked to asparagine 34. Substrate contacts are provided by residues 41-45, lysine 66, and arginine 85; that span reads KPVNT. Catalysis depends on histidine 119, which acts as the Proton donor.

The protein belongs to the pancreatic ribonuclease family. In terms of assembly, monomer. Interacts with and forms tight 1:1 complexes with RNH1. Dimerization of two such complexes may occur. Interaction with RNH1 inhibits this protein. In terms of tissue distribution, pancreas.

It is found in the secreted. It catalyses the reaction an [RNA] containing cytidine + H2O = an [RNA]-3'-cytidine-3'-phosphate + a 5'-hydroxy-ribonucleotide-3'-[RNA].. It carries out the reaction an [RNA] containing uridine + H2O = an [RNA]-3'-uridine-3'-phosphate + a 5'-hydroxy-ribonucleotide-3'-[RNA].. In terms of biological role, endonuclease that catalyzes the cleavage of RNA on the 3' side of pyrimidine nucleotides. Acts on single-stranded and double-stranded RNA. The polypeptide is Ribonuclease pancreatic (RNASE1) (Alces alces alces (European moose)).